A 930-amino-acid chain; its full sequence is Isoleucine--tRNA ligase (930 aa).

The 'HIGH' region motif lies at 57–67; sequence PYANGNIHVGH. Residue glutamate 554 coordinates L-isoleucyl-5'-AMP. A 'KMSKS' region motif is present at residues 595 to 599; the sequence is KMSKS. Residue lysine 598 participates in ATP binding. Positions 888, 891, 908, and 911 each coordinate Zn(2+).

It belongs to the class-I aminoacyl-tRNA synthetase family. IleS type 1 subfamily. In terms of assembly, monomer. Zn(2+) is required as a cofactor.

The protein resides in the cytoplasm. The enzyme catalyses tRNA(Ile) + L-isoleucine + ATP = L-isoleucyl-tRNA(Ile) + AMP + diphosphate. Its function is as follows. Catalyzes the attachment of isoleucine to tRNA(Ile). As IleRS can inadvertently accommodate and process structurally similar amino acids such as valine, to avoid such errors it has two additional distinct tRNA(Ile)-dependent editing activities. One activity is designated as 'pretransfer' editing and involves the hydrolysis of activated Val-AMP. The other activity is designated 'posttransfer' editing and involves deacylation of mischarged Val-tRNA(Ile). This chain is Isoleucine--tRNA ligase, found in Streptococcus gordonii (strain Challis / ATCC 35105 / BCRC 15272 / CH1 / DL1 / V288).